A 710-amino-acid polypeptide reads, in one-letter code: Serine/threonine-protein phosphatase PP-Z2 (710 aa).

The tract at residues Met1–Asn382 is disordered. Gly2 is lipidated: N-myristoyl glycine. Basic and acidic residues predominate over residues Lys15 to Leu27. Over residues Ser40 to Ser49 the composition is skewed to low complexity. Phosphoserine is present on residues Ser55 and Ser71. Composition is skewed to polar residues over residues Asn62–Leu77 and Pro95–Pro104. Low complexity-rich tracts occupy residues Ser105–Ser125 and Asn143–Ser155. A compositionally biased stretch (acidic residues) spans Leu160–Gly172. Residue Thr161 is modified to Phosphothreonine. Residues Ser203 and Ser224 each carry the phosphoserine modification. Residues Ser247–Ser260 are compositionally biased toward low complexity. The span at Phe261–Leu273 shows a compositional bias: polar residues. Thr271 bears the Phosphothreonine mark. Position 275 is a phosphoserine (Ser275). Residues Asp291 to Pro302 show a composition bias toward polar residues. Ser310 bears the Phosphoserine mark. Asp454, His456, Asp482, and Asn514 together coordinate Mn(2+). Catalysis depends on His515, which acts as the Proton donor. Residues His563 and His638 each contribute to the Mn(2+) site.

The protein belongs to the PPP phosphatase family. PP-Z subfamily. Requires Mn(2+) as cofactor.

The catalysed reaction is O-phospho-L-seryl-[protein] + H2O = L-seryl-[protein] + phosphate. It catalyses the reaction O-phospho-L-threonyl-[protein] + H2O = L-threonyl-[protein] + phosphate. Its function is as follows. Essential for the maintenance of cell size and integrity in response to osmotic stress. The sequence is that of Serine/threonine-protein phosphatase PP-Z2 (PPZ2) from Saccharomyces cerevisiae (strain ATCC 204508 / S288c) (Baker's yeast).